A 1300-amino-acid chain; its full sequence is Insulin receptor-related protein (1300 aa).

Residues 1–26 form the signal peptide; the sequence is MAVPALWPWGVHLLMSLLSLGSGLDT. Asn47 and Asn100 each carry an N-linked (GlcNAc...) asparagine glycan. Cystine bridges form between Cys214-Cys222, Cys216-Cys228, Cys229-Cys237, Cys233-Cys246, Cys249-Cys258, Cys262-Cys274, Cys280-Cys300, Cys304-Cys317, and Cys320-Cys324. The N-linked (GlcNAc...) asparagine glycan is linked to Asn311. Asn411, Asn492, Asn528, Asn616, Asn634, Asn756, Asn885, and Asn898 each carry an N-linked (GlcNAc...) asparagine glycan. 2 consecutive Fibronectin type-III domains span residues 483–603 and 607–707; these read QTRT…TLPA and VPQD…AQEV. An intrachain disulfide couples Cys657 to Cys864. At 747–921 the chain is on the extracellular side; it reads EAGLLRLGKN…LEEEDTGGMR (175 aa). Residues 818-913 form the Fibronectin type-III 3 domain; the sequence is IPGKVAWKAA…GVTFYITDLE (96 aa). Residues 922–943 form a helical membrane-spanning segment; the sequence is IFLTVTPVGFMLLVTLAALGFF. The Cytoplasmic segment spans residues 944-1300; sequence YSRKRNSTLY…YSAPNGGPGH (357 aa). The Protein kinase domain occupies 979 to 1254; that stretch reads IAIIRELGQG…RIQDELRPSF (276 aa). Residues 985–993 and Lys1013 each bind ATP; that span reads LGQGSFGMV. The active-site Proton acceptor is Asp1115. A phosphotyrosine; by autocatalysis mark is found at Tyr1145 and Tyr1146. Positions 1273–1300 are disordered; it reads LPTEAEPDSPPTLNGASDYSAPNGGPGH.

This sequence belongs to the protein kinase superfamily. Tyr protein kinase family. Insulin receptor subfamily. In terms of assembly, probable tetramer of 2 alpha and 2 beta chains linked by disulfide bonds. The alpha chains contribute to the formation of the ligand-binding domain, while the beta chains carry the kinase domain. Post-translationally, autophosphorylated on tyrosine residues between pH 7.9 and pH 10.5. In terms of tissue distribution, highly expressed in the islets as well as in pancreatic beta-cells.

It localises to the membrane. It catalyses the reaction L-tyrosyl-[protein] + ATP = O-phospho-L-tyrosyl-[protein] + ADP + H(+). Receptor with tyrosine-protein kinase activity. Functions as a pH sensing receptor which is activated by increased extracellular pH. Activates an intracellular signaling pathway that involves IRS1 and AKT1/PKB. In Mus musculus (Mouse), this protein is Insulin receptor-related protein (Insrr).